Here is a 313-residue protein sequence, read N- to C-terminus: Leucine-rich repeat-containing protein 52 (313 aa).

The N-terminal stretch at 1 to 23 is a signal peptide; it reads MSLASGPGPGWLLFSFGMGLVSG. An LRRNT domain is found at 24 to 53; sequence SKCPNNCLCQAQEVICTGKQLTEYPLDIPL. The Extracellular portion of the chain corresponds to 24-244; it reads SKCPNNCLCQ…MCITHLDHKD (221 aa). Intrachain disulfides connect cysteine 26-cysteine 32 and cysteine 30-cysteine 39. LRR repeat units lie at residues 54–75, 78–99, 102–123, 126–148, and 151–172; these read NTRR…HLGL, DLVY…TFIG, KLIY…TFSV, NLVQ…TFAN, and SLRY…ALYH. Residues asparagine 112 and asparagine 148 are each glycosylated (N-linked (GlcNAc...) asparagine). In terms of domain architecture, LRRCT spans 184-238; it reads NPWKCNCSFLDFAIFLIVFHMDPSDDLNATCVEPTELTGWPITRVGNPLRYMCIT. Cystine bridges form between cysteine 188–cysteine 214 and cysteine 190–cysteine 236. N-linked (GlcNAc...) asparagine glycans are attached at residues asparagine 189 and asparagine 211. The helical transmembrane segment at 245-265 threads the bilayer; it reads YIFLLLIGFCIFAAGTVAAWL. The Cytoplasmic segment spans residues 266–313; it reads TGVCAVLYQNTRHKSSEEDEDEAGTRVEVSRRIFQTQTSSVQEFPQLI.

As to quaternary structure, may interact with KCNU1; this interaction may be required for LRRC52 stability and may change the channel gating properties. Interacts with KCNMA1. N-glycosylated. In terms of tissue distribution, mainly expressed in testis and skeletal muscle.

Its subcellular location is the cell membrane. In terms of biological role, auxiliary protein of the large-conductance, voltage and calcium-activated potassium channel (BK alpha). Modulates gating properties by producing a marked shift in the BK channel's voltage dependence of activation in the hyperpolarizing direction, and in the absence of calcium. KCNU1 channel auxiliary protein. Modulates KCNU1 gating properties. The protein is Leucine-rich repeat-containing protein 52 (LRRC52) of Homo sapiens (Human).